Reading from the N-terminus, the 456-residue chain is MTGDSRSISEPSINLDPDNTSFSDENSDDFFMDNSYDIDEIDHSDESNRQSVIVDSKVTVPPSKHSTLTLSDSEDSDAKEQHQSLSRSSSKNVNIEDITEPKPDKPSGRTRGRSVMKESVVEINSSESDLDEDKNFPRSRSRSRSSIRSISPAGKYKRQKSSLLYTYDENDDFFKELAKEAKKSTTISKESTPDQRKRVYNIKFLSKLEGTINKAVQVKVLGKYEFSKILPAALDGLMKSYKIPKVMKDIYKVENVTLYWNNAKLLTFMTCNSLHIPQDFENEVSDIDVTIVSKEYEKNFEATLESKLKEEEAALLIKERQEMERKLEKKRNEQEESEYREFESELKNVEETQEIKENDTVMNTKLLQEGGSLSGNSSSMEEVMRIALMGQDNKKIYVHVRRSTPFSKIAEYYRIQKQLPQKTRVKLLFDHDELDMNECIADQDMEDEDMVDVIID.

Positions 1–24 (MTGDSRSISEPSINLDPDNTSFSD) are enriched in polar residues. The disordered stretch occupies residues 1 to 154 (MTGDSRSISE…SSIRSISPAG (154 aa)). The segment covering 25 to 43 (ENSDDFFMDNSYDIDEIDH) has biased composition (acidic residues). The segment covering 83–93 (QSLSRSSSKNV) has biased composition (polar residues). Phosphoserine occurs at positions 90, 125, and 126. An SUMO-like region 1 repeat occupies 169–287 (ENDDFFKELA…QDFENEVSDI (119 aa)). The stretch at 301 to 360 (EATLESKLKEEEAALLIKERQEMERKLEKKRNEQEESEYREFESELKNVEETQEIKENDT) forms a coiled coil. One copy of the SUMO-like region 2 repeat lies at 380 to 456 (MEEVMRIALM…DEDMVDVIID (77 aa)).

As to quaternary structure, component of a cullin-RING ligase (CRL)-like complex composed of at least the cullin RTT101, a linker protein MMS1, and the potential substrate receptor ESC2. Interacts with RTT101 and MMS1. Interacts with SIR2.

Its subcellular location is the cytoplasm. The protein resides in the nucleus. May be a substrate targeting component of a cullin-RING-based E3 ubiquitin-protein ligase complex RTT101(MMS1-ESC2). Involved in HMR and telomere silencing via the recruitment or stabilizing of the SIR (silent information regulators) complex. This is Protein ESC2 (ESC2) from Saccharomyces cerevisiae (strain ATCC 204508 / S288c) (Baker's yeast).